Here is a 233-residue protein sequence, read N- to C-terminus: MSQSPIELKGSSFTLSVVHLYNSEPEVIRQALQEKVEQAPAFLKNAPVVINVATLNGDANWKELQQAVTAAGLRVVGISGCRDERQKRAIARAGLPLLNEGKGQKMATPEPAPAPAPVVDPNAPAKTRIISTPVRSGQQIYARNSDLIVTSSVSAGAELIADGNIHVYGMMRGRALAGASGDTQCQIFCTHLGAELVSIAGQYWLSDQIPSDFVGQAVRLSLLDNALTIQPLN.

Residues 104–124 (QKMATPEPAPAPAPVVDPNAP) form a disordered region.

It belongs to the MinC family. Interacts with MinD and FtsZ.

Its function is as follows. Cell division inhibitor that blocks the formation of polar Z ring septums. Rapidly oscillates between the poles of the cell to destabilize FtsZ filaments that have formed before they mature into polar Z rings. Prevents FtsZ polymerization. The chain is Probable septum site-determining protein MinC from Serratia proteamaculans (strain 568).